A 407-amino-acid polypeptide reads, in one-letter code: Probable endo-beta-1,4-glucanase celB (407 aa).

The first 18 residues, methionine 1–alanine 18, serve as a signal peptide directing secretion. N-linked (GlcNAc...) asparagine glycosylation is present at asparagine 136. Glutamate 216 serves as the catalytic Nucleophile. Glutamate 221 functions as the Proton donor in the catalytic mechanism.

Belongs to the glycosyl hydrolase 7 (cellulase C) family.

Its subcellular location is the secreted. It catalyses the reaction Endohydrolysis of (1-&gt;4)-beta-D-glucosidic linkages in cellulose, lichenin and cereal beta-D-glucans.. Its function is as follows. Has endoglucanase activity on substrates containing beta-1,4 glycosidic bonds, like in carboxymethylcellulose (CMC), hydroxyethylcellulose (HEC) and beta-glucan. Involved in the degradation of complex natural cellulosic substrates. This is Probable endo-beta-1,4-glucanase celB (celB) from Neosartorya fischeri (strain ATCC 1020 / DSM 3700 / CBS 544.65 / FGSC A1164 / JCM 1740 / NRRL 181 / WB 181) (Aspergillus fischerianus).